The chain runs to 160 residues: 6,7-dimethyl-8-ribityllumazine synthase (160 aa).

Residues Phe32, 66–68 (ALE), and 90–92 (CII) contribute to the 5-amino-6-(D-ribitylamino)uracil site. 95-96 (ET) contacts (2S)-2-hydroxy-3-oxobutyl phosphate. Residue His98 is the Proton donor of the active site. Asn123 lines the 5-amino-6-(D-ribitylamino)uracil pocket. Residue Arg137 participates in (2S)-2-hydroxy-3-oxobutyl phosphate binding.

This sequence belongs to the DMRL synthase family.

It carries out the reaction (2S)-2-hydroxy-3-oxobutyl phosphate + 5-amino-6-(D-ribitylamino)uracil = 6,7-dimethyl-8-(1-D-ribityl)lumazine + phosphate + 2 H2O + H(+). Its pathway is cofactor biosynthesis; riboflavin biosynthesis; riboflavin from 2-hydroxy-3-oxobutyl phosphate and 5-amino-6-(D-ribitylamino)uracil: step 1/2. Its function is as follows. Catalyzes the formation of 6,7-dimethyl-8-ribityllumazine by condensation of 5-amino-6-(D-ribitylamino)uracil with 3,4-dihydroxy-2-butanone 4-phosphate. This is the penultimate step in the biosynthesis of riboflavin. In Methylibium petroleiphilum (strain ATCC BAA-1232 / LMG 22953 / PM1), this protein is 6,7-dimethyl-8-ribityllumazine synthase.